Here is a 148-residue protein sequence, read N- to C-terminus: Urease accessory protein UreE (148 aa).

Belongs to the UreE family.

It localises to the cytoplasm. In terms of biological role, involved in urease metallocenter assembly. Binds nickel. Probably functions as a nickel donor during metallocenter assembly. This Geobacillus kaustophilus (strain HTA426) protein is Urease accessory protein UreE.